We begin with the raw amino-acid sequence, 201 residues long: Small ribosomal subunit protein uS4c (201 aa).

The 62-residue stretch at Met89 to Asn150 folds into the S4 RNA-binding domain.

It belongs to the universal ribosomal protein uS4 family. In terms of assembly, part of the 30S ribosomal subunit. Contacts protein S5. The interaction surface between S4 and S5 is involved in control of translational fidelity.

The protein resides in the plastid. It is found in the chloroplast. Its function is as follows. One of the primary rRNA binding proteins, it binds directly to 16S rRNA where it nucleates assembly of the body of the 30S subunit. Functionally, with S5 and S12 plays an important role in translational accuracy. In Phalaenopsis aphrodite subsp. formosana (Moth orchid), this protein is Small ribosomal subunit protein uS4c (rps4).